Reading from the N-terminus, the 276-residue chain is MPELPEVENVRRTLENLVTGKTIEDVIVTYPKIVKRPDDAKIFKEMLKGETIENIKRRGKFLLLYVTNYVIVSHLRMEGKFLLHQEDEPIDKHTHVRFLFTDGTELHYKDVRKFGTMHLFKKGEEMNQMPLADLGPEPFDAELTPQYLQERLQKTNRKIKVVLLDQRLLVGLGNIYVDEVLFRSQIHPEREASSLTAEEIERIYEATVTTLGEAVKRGGSTIRTYINSQGQIGSFQELLNVYGKKGEPCVTCGTILEKTVVGGRGTHYCPICQPRI.

The active-site Schiff-base intermediate with DNA is proline 2. The active-site Proton donor is the glutamate 3. The active-site Proton donor; for beta-elimination activity is lysine 60. Residues histidine 93 and arginine 112 each coordinate DNA. An FPG-type zinc finger spans residues asparagine 240–proline 274. Arginine 264 functions as the Proton donor; for delta-elimination activity in the catalytic mechanism.

Belongs to the FPG family. As to quaternary structure, monomer. The cofactor is Zn(2+).

The catalysed reaction is Hydrolysis of DNA containing ring-opened 7-methylguanine residues, releasing 2,6-diamino-4-hydroxy-5-(N-methyl)formamidopyrimidine.. It catalyses the reaction 2'-deoxyribonucleotide-(2'-deoxyribose 5'-phosphate)-2'-deoxyribonucleotide-DNA = a 3'-end 2'-deoxyribonucleotide-(2,3-dehydro-2,3-deoxyribose 5'-phosphate)-DNA + a 5'-end 5'-phospho-2'-deoxyribonucleoside-DNA + H(+). Involved in base excision repair of DNA damaged by oxidation or by mutagenic agents. Acts as a DNA glycosylase that recognizes and removes damaged bases. Has a preference for oxidized purines, such as 7,8-dihydro-8-oxoguanine (8-oxoG). Has AP (apurinic/apyrimidinic) lyase activity and introduces nicks in the DNA strand. Cleaves the DNA backbone by beta-delta elimination to generate a single-strand break at the site of the removed base with both 3'- and 5'-phosphates. The chain is Formamidopyrimidine-DNA glycosylase from Bacillus cereus (strain ATCC 10987 / NRS 248).